Consider the following 251-residue polypeptide: Small ribosomal subunit protein uS2 (251 aa).

It belongs to the universal ribosomal protein uS2 family.

In Aromatoleum aromaticum (strain DSM 19018 / LMG 30748 / EbN1) (Azoarcus sp. (strain EbN1)), this protein is Small ribosomal subunit protein uS2.